Reading from the N-terminus, the 319-residue chain is Acetyl esterase (319 aa).

An Involved in the stabilization of the negatively charged intermediate by the formation of the oxyanion hole motif is present at residues 91–93 (HGG). Residues Ser-165, Asp-262, and His-292 contribute to the active site.

It belongs to the 'GDXG' lipolytic enzyme family. Homodimer. Interacts with MalT and MelA.

The protein localises to the cytoplasm. Functionally, displays esterase activity towards short chain fatty esters (acyl chain length of up to 8 carbons). Able to hydrolyze triacetylglycerol (triacetin) and tributyrylglycerol (tributyrin), but not trioleylglycerol (triolein) or cholesterol oleate. Negatively regulates MalT activity by antagonizing maltotriose binding. Inhibits MelA galactosidase activity. The protein is Acetyl esterase of Escherichia coli O139:H28 (strain E24377A / ETEC).